Consider the following 188-residue polypeptide: HGPRTase-like protein (188 aa).

Belongs to the purine/pyrimidine phosphoribosyltransferase family. Archaeal HPRT subfamily.

Its function is as follows. May catalyze a purine salvage reaction, the substrate is unknown. In Halobacterium salinarum (strain ATCC 29341 / DSM 671 / R1), this protein is HGPRTase-like protein.